The following is a 97-amino-acid chain: MSLLDAHIPQLVASQSAFAAKAGLMRHTIGQAEQAAMSAQAFHQGESSAAFQAAHARFVAAAAKVNTLLDVAQANLGEAAGTYVAADAAAASTYTGF.

S2 carries the N-acetylserine modification.

This sequence belongs to the WXG100 family. CFP-10 subfamily. In terms of assembly, forms a tight 1:1 complex with EsxH.

It localises to the secreted. EsxG, in complex with EsxH, disrupts ESCRT function and impairs host phagosome maturation, thereby promoting intracellular bacterial growth. The complex acts by interacting, via EsxH, with the host hepatocyte growth factor-regulated tyrosine kinase substrate (HGS/HRS), a component of the ESCRT machinery. EsxG stabilizes EsxH in the host cytosol. In Mycobacterium tuberculosis (strain ATCC 25618 / H37Rv), this protein is ESAT-6-like protein EsxG.